The following is a 93-amino-acid chain: Small ribosomal subunit protein uS19 (93 aa).

This sequence belongs to the universal ribosomal protein uS19 family.

Its function is as follows. Protein S19 forms a complex with S13 that binds strongly to the 16S ribosomal RNA. This Phytoplasma australiense protein is Small ribosomal subunit protein uS19.